Consider the following 268-residue polypeptide: MPLAKRIIPCLDVDEGRVVKGINFVDIRDAGDPVEQARTYDAAGADELVFLDITATHEDRDIMHDVVRRTADQVFIPLTVGGGLRSVDDMRAMLQAGADKVAINSAAVKDPDLIARGADAFGDQCIVVAIDAKRRDGDGPAWEVVVHGGRKPTGRDAVEWAAEAEARGAGEILLTSMDRDGTKDGYDLALLRAVTERTQIPVIASGGAGTLEHLREGLVDGGASAVLAASIFHFREHTVEEAKDHLRDAGLPVRPALNNWTDRYAPTD.

Residues Asp12 and Asp131 contribute to the active site.

Belongs to the HisA/HisF family. In terms of assembly, heterodimer of HisH and HisF.

It is found in the cytoplasm. The enzyme catalyses 5-[(5-phospho-1-deoxy-D-ribulos-1-ylimino)methylamino]-1-(5-phospho-beta-D-ribosyl)imidazole-4-carboxamide + L-glutamine = D-erythro-1-(imidazol-4-yl)glycerol 3-phosphate + 5-amino-1-(5-phospho-beta-D-ribosyl)imidazole-4-carboxamide + L-glutamate + H(+). It participates in amino-acid biosynthesis; L-histidine biosynthesis; L-histidine from 5-phospho-alpha-D-ribose 1-diphosphate: step 5/9. In terms of biological role, IGPS catalyzes the conversion of PRFAR and glutamine to IGP, AICAR and glutamate. The HisF subunit catalyzes the cyclization activity that produces IGP and AICAR from PRFAR using the ammonia provided by the HisH subunit. The sequence is that of Imidazole glycerol phosphate synthase subunit HisF from Salinibacter ruber (strain DSM 13855 / M31).